Reading from the N-terminus, the 761-residue chain is Xaa-Pro dipeptidyl-peptidase (761 aa).

Residues Ser-349, Asp-469, and His-499 each act as charge relay system in the active site.

Belongs to the peptidase S15 family. Homodimer.

The protein localises to the cytoplasm. The enzyme catalyses Hydrolyzes Xaa-Pro-|- bonds to release unblocked, N-terminal dipeptides from substrates including Ala-Pro-|-p-nitroanilide and (sequentially) Tyr-Pro-|-Phe-Pro-|-Gly-Pro-|-Ile.. Removes N-terminal dipeptides sequentially from polypeptides having unsubstituted N-termini provided that the penultimate residue is proline. In Streptococcus equi subsp. equi (strain 4047), this protein is Xaa-Pro dipeptidyl-peptidase.